Here is a 714-residue protein sequence, read N- to C-terminus: Forkhead box protein P2 (714 aa).

The span at 1–28 shows a compositional bias: polar residues; the sequence is MMQESATETISNSSMNQNGMSTLSSQLD. 2 disordered regions span residues 1–45 and 280–338; these read MMQE…SEVS and DNGI…TGAS. The span at 291-304 shows a compositional bias: low complexity; the sequence is TTNNSSSTTSSTTS. Residues 314-323 are compositionally biased toward polar residues; that stretch reads SIVNGQSSVL. The span at 325-336 shows a compositional bias: basic and acidic residues; sequence ARRDSSSHEETG. A C2H2-type zinc finger spans residues 345-370; that stretch reads GVCKWPGCESICEDFGQFLKHLNNEH. The segment at 387 to 408 is leucine-zipper; that stretch reads VQQLEIQLSKERERLQAMMTHL. Positions 421–425 are CTBP1-binding; it reads PLNLV. The segment covering 437–458 has biased composition (low complexity); sequence TSPQSLPQTPTTPTAPVTPITQ. A disordered region spans residues 437-464; it reads TSPQSLPQTPTTPTAPVTPITQGPSVIT. Residues 503-593 constitute a DNA-binding region (fork-head); it reads RPPFTYATLI…SQKITGSPTL (91 aa). Disordered regions lie at residues 648–667 and 677–714; these read LDHI…QPHI and VIAE…EDLE. Acidic residues predominate over residues 698–714; the sequence is LEDDREIEEEPLSEDLE.

As to quaternary structure, forms homodimers and heterodimers with FOXP1 and FOXP4. Dimerization is required for DNA-binding. Interacts with CTBP1. Interacts with FOXP1. Interacts with TBR1. Interacts with ZMYM2. In terms of tissue distribution, highest expression in lung. Lower expression in spleen, skeletal muscle, brain, kidney and small intestine.

The protein localises to the nucleus. Functionally, transcriptional repressor that may play a role in the specification and differentiation of lung epithelium. May also play a role in developing neural, gastrointestinal and cardiovascular tissues. Can act with CTBP1 to synergistically repress transcription but CTPBP1 is not essential. Plays a role in synapse formation by regulating SRPX2 levels. The polypeptide is Forkhead box protein P2 (Foxp2) (Mus musculus (Mouse)).